Consider the following 790-residue polypeptide: Protein SEY1 (790 aa).

Residues 1-692 (MELSEGELSH…KRSIVQHITQ (692 aa)) are Cytoplasmic-facing. The GB1/RHD3-type G domain occupies 55-284 (GNNYHIISVF…VNNELFKPEY (230 aa)). 65 to 72 (GSQSTGKS) provides a ligand contact to GTP. The chain crosses the membrane as a helical span at residues 693 to 713 (IPYYIYLIILVLGWNEFMAII). Over 714–716 (RNP) the chain is Lumenal. A helical membrane pass occupies residues 717–737 (LFFSLSIVLGATVYVLYYLNL). The Cytoplasmic segment spans residues 738 to 790 (LKPAMLVAQRTMDEVIIMAKTKLREVLIDDHEVTGRQLNKIAGGKENIELDDM).

The protein belongs to the TRAFAC class dynamin-like GTPase superfamily. GB1/RHD3 GTPase family. RHD3 subfamily.

The protein localises to the endoplasmic reticulum membrane. Functionally, cooperates with the reticulon proteins and tubule-shaping DP1 family proteins to generate and maintain the structure of the tubular endoplasmic reticulum network. Has GTPase activity, which is required for its function in ER organization. The chain is Protein SEY1 from Candida dubliniensis (strain CD36 / ATCC MYA-646 / CBS 7987 / NCPF 3949 / NRRL Y-17841) (Yeast).